The sequence spans 275 residues: Large ribosomal subunit protein uL2 (275 aa).

Residues 223–275 form a disordered region; sequence VAMNPVDHPHGGGEGRTSGGRHPVSPWGQPTKGYKTRSNKRTDKYIVRRRNKK.

Belongs to the universal ribosomal protein uL2 family. In terms of assembly, part of the 50S ribosomal subunit. Forms a bridge to the 30S subunit in the 70S ribosome.

Functionally, one of the primary rRNA binding proteins. Required for association of the 30S and 50S subunits to form the 70S ribosome, for tRNA binding and peptide bond formation. It has been suggested to have peptidyltransferase activity; this is somewhat controversial. Makes several contacts with the 16S rRNA in the 70S ribosome. This chain is Large ribosomal subunit protein uL2, found in Shewanella halifaxensis (strain HAW-EB4).